We begin with the raw amino-acid sequence, 328 residues long: Fructose-1,6-bisphosphatase class 1 (328 aa).

Residues Glu-89, Asp-110, Leu-112, and Asp-113 each contribute to the Mg(2+) site. Substrate is bound by residues Asn-206, Tyr-234, 252–254 (YLY), and Lys-264. Glu-270 lines the Mg(2+) pocket.

This sequence belongs to the FBPase class 1 family. As to quaternary structure, homotetramer. Mg(2+) serves as cofactor.

It is found in the cytoplasm. The enzyme catalyses beta-D-fructose 1,6-bisphosphate + H2O = beta-D-fructose 6-phosphate + phosphate. Its pathway is carbohydrate biosynthesis; gluconeogenesis. This is Fructose-1,6-bisphosphatase class 1 from Wigglesworthia glossinidia brevipalpis.